Here is a 467-residue protein sequence, read N- to C-terminus: Methylenetetrahydrofolate--tRNA-(uracil-5-)-methyltransferase TrmFO (467 aa).

Residue 11-16 coordinates FAD; that stretch reads GAGLAG.

It belongs to the MnmG family. TrmFO subfamily. It depends on FAD as a cofactor.

The protein resides in the cytoplasm. It carries out the reaction uridine(54) in tRNA + (6R)-5,10-methylene-5,6,7,8-tetrahydrofolate + NADH + H(+) = 5-methyluridine(54) in tRNA + (6S)-5,6,7,8-tetrahydrofolate + NAD(+). The catalysed reaction is uridine(54) in tRNA + (6R)-5,10-methylene-5,6,7,8-tetrahydrofolate + NADPH + H(+) = 5-methyluridine(54) in tRNA + (6S)-5,6,7,8-tetrahydrofolate + NADP(+). Functionally, catalyzes the folate-dependent formation of 5-methyl-uridine at position 54 (M-5-U54) in all tRNAs. The protein is Methylenetetrahydrofolate--tRNA-(uracil-5-)-methyltransferase TrmFO of Prochlorococcus marinus (strain NATL1A).